The following is an 880-amino-acid chain: Paramyosin (880 aa).

The interval 1–34 is nonhelical region; the sequence is MSGSLYRSPSAALYKSPSMSAFGGLPAAFGSMSV. Positions 35–859 form a coiled coil; the sequence is ADLGSLTRLE…LIRAKHRHQL (825 aa). The tract at residues 860–880 is nonhelical region; it reads LRAKMLQRQKFTFSKMSNRDN.

The protein belongs to the paramyosin family. As to quaternary structure, homodimer.

The protein resides in the cytoplasm. The protein localises to the myofibril. In terms of biological role, paramyosin is a major structural component of many thick filaments isolated from invertebrate muscles. The polypeptide is Paramyosin (Brugia malayi (Filarial nematode worm)).